We begin with the raw amino-acid sequence, 169 residues long: Group 2 truncated hemoglobin 3-2 (169 aa).

His99 contributes to the heme b binding site.

It belongs to the truncated hemoglobin family. Group II subfamily. Homodimer when ferric.

Functionally, hemoglobin-like protein that exhibits an unusual concentration-independent binding of O(2) and CO. Required for general plant development and during nodulation. May promote shoot organogenesis from root explants. The polypeptide is Group 2 truncated hemoglobin 3-2 (Medicago truncatula (Barrel medic)).